Consider the following 122-residue polypeptide: Large ribosomal subunit protein bL17 (122 aa).

This sequence belongs to the bacterial ribosomal protein bL17 family. Part of the 50S ribosomal subunit. Contacts protein L32.

This Wigglesworthia glossinidia brevipalpis protein is Large ribosomal subunit protein bL17.